The chain runs to 471 residues: 3-hydroxylaminophenol mutase (471 aa).

Positions 15–100 constitute a GS beta-grasp domain; it reads NDVKFVDFRF…TCDVVEPSDG (86 aa). The GS catalytic domain occupies 107–471; sequence PRSIAKRAEA…PVEFEMYYSL (365 aa).

The protein belongs to the glutamine synthetase family.

The catalysed reaction is 3-hydroxyaminophenol = aminohydroquinone. Its activity is regulated as follows. Is inhibited by H(2)O(2). 1,10-phenanthroline inhibits the activity slightly, but other metal cation chelators such as EDTA or tiron have no effect on the activity. Divalent metal cations and hydroxylamine have also no effect on the activity. Due to the relationship of the protein with glutamine synthetases, glutamate and glutamine were tested as inhibitors; neither preincubation of the compounds with the enzyme nor their addition to the assay buffer affected 3HAP mutase activity. Its function is as follows. Catalyzes the isomerization of 3-hydroxylaminophenol (3HAP) to aminohydroquinone, a step in the degradative pathway of 3-nitrophenol. The enzymatic reaction is regiospecific since it leads to the formation of aminohydroquinone exclusively, without producing the isomeric 4-aminocatechol. Can also isomerize other hydroxylaminoaromatic compounds, such as hydroxylaminobenzene to a mixture of 2-aminophenol and 4-aminophenol, 4-hydroxylaminotoluene to 6-amino-m-cresol, and 2-chloro-5-hydroxylaminophenol to 2-amino-5-chlorohydroquinone. Does not act on 4-hydroxylaminobenzoate. The polypeptide is 3-hydroxylaminophenol mutase (Cupriavidus pinatubonensis (strain JMP 134 / LMG 1197) (Cupriavidus necator (strain JMP 134))).